Here is an 847-residue protein sequence, read N- to C-terminus: Receptor-like protein 12 (847 aa).

The N-terminal stretch at 1-27 (MMIRSHRHWVFSSRIIIFLSLLVHSLA) is a signal peptide. Residues 28–798 (SSSPHFCRDD…LSEAEENMFN (771 aa)) are Extracellular-facing. N-linked (GlcNAc...) asparagine glycans are attached at residues N52, N66, N103, and N132. LRR repeat units follow at residues 109–133 (LQYLRHLDLTNCNLYGEIPSSLGNL), 135–157 (HLTLVNLYFNKFVGEIPASIGNL), 158–181 (NQLRHLILANNVLTGEIPSSLGNL), 183–205 (RLVNLELFSNRLVGKIPDSIGDL), 206–229 (KQLRNLSLASNNLIGEIPSSLGNL), 231–253 (NLVHLVLTHNQLVGEVPASIGNL), 254–277 (IELRVMSFENNSLSGNIPISFANL), 279–301 (KLSIFVLSSNNFTSTFPFDMSIF), 302–325 (HNLEYFDVSYNSFSGPFPKSLLLI), 326–350 (PSLESIYLQENQFTGPIEFANTSSS), 351–374 (TKLQDLILGRNRLHGPIPESISRL), 375–398 (LNLEELDISHNNFTGAIPPTISKL), 400–422 (NLLHLDLSKNNLEGEVPACLWRL), 424–442 (TMVLSHNSFSSFENTSQEE), 443–466 (ALIEELDLNSNSFQGPIPYMICKL), 467–491 (SSLGFLDLSNNLFSGSIPSCIRNFS), 492–514 (GSIKELNLGDNNFSGTLPDIFSK), 516–539 (TELVSLDVSHNQLEGKFPKSLINC), 541–562 (ALELVNVESNKIKDIFPSWLES), 563–587 (LPSLHVLNLRSNKFYGPLYHRHASI), 589–613 (FQSLRIIDISHNNFSGTLPPYYFSN), 657–681 (RRDFRAIDFSGNKINGNIPESLGYL), 682–704 (KELRVLNLSGNAFTSVIPRFLAN), 705–729 (LTKLETLDISRNKLSGQIPQDLAAL), and 731–754 (FLSYMNFSHNLLQGPVPRGTQFQR). Residue N180 is glycosylated (N-linked (GlcNAc...) asparagine). Residues N210 and N228 are each glycosylated (N-linked (GlcNAc...) asparagine). Residues N263, N276, and N289 are each glycosylated (N-linked (GlcNAc...) asparagine). N-linked (GlcNAc...) asparagine glycosylation occurs at N346. N386 carries N-linked (GlcNAc...) asparagine glycosylation. N437 carries N-linked (GlcNAc...) asparagine glycosylation. N489 and N503 each carry an N-linked (GlcNAc...) asparagine glycan. N601 carries N-linked (GlcNAc...) asparagine glycosylation. 2 N-linked (GlcNAc...) asparagine glycosylation sites follow: N688 and N704. An N-linked (GlcNAc...) asparagine glycan is attached at N736. Residues 799 to 819 (WVAAAIAYGPGVLCGLVIGHF) traverse the membrane as a helical segment. The Cytoplasmic portion of the chain corresponds to 820–847 (YTSHNHEWFTEKFGRKQHKALTSVKCSL).

Belongs to the RLP family.

Its subcellular location is the cell membrane. Functionally, involved in the perception of CLV3 and CLV3-like peptides, that act as extracellular signals regulating meristems maintenance. The sequence is that of Receptor-like protein 12 from Arabidopsis thaliana (Mouse-ear cress).